The chain runs to 102 residues: Signal recognition particle 19 kDa protein (102 aa).

The protein belongs to the SRP19 family. Part of the signal recognition particle protein translocation system, which is composed of SRP and FtsY. Archaeal SRP consists of a 7S RNA molecule of 300 nucleotides and two protein subunits: SRP54 and SRP19.

It is found in the cytoplasm. Its function is as follows. Involved in targeting and insertion of nascent membrane proteins into the cytoplasmic membrane. Binds directly to 7S RNA and mediates binding of the 54 kDa subunit of the SRP. The chain is Signal recognition particle 19 kDa protein from Saccharolobus solfataricus (strain ATCC 35092 / DSM 1617 / JCM 11322 / P2) (Sulfolobus solfataricus).